A 749-amino-acid polypeptide reads, in one-letter code: MYRKWDLCITRHLLPYIEHSVIPIIALLVLSLIFYILYICFGTTSYILSGIILGAYVNSLFHNNHSVILNIKHPELGEPLKPYQTPLPPELEAPLQLLISKLTQHYINGWYKHVSEDPSFIREVQSTIEYIMRQFYAYVSSQESSHIIYELLKNAISTTTLVLSDLNHFRSKKIPLTEFALRYPESAVSKLLDQASIERTLRAQASAMIVKFSRPEDSACLPLHCLLREVLAMQVFKRITTHCSSPRFVNRCIILYFSSSEDKSDCLAKKNYVNKCLMAKALKDYPVHTNIDPDAGKLSFDDAFYEAHIELHYQFLKEASLNTLIKDKKMLKFIITVRPVHLHVSPWVVYRRYRGFKTLYYLLKKQSARNGRAVPSFPVWRGNTYEKFREGLYFFIEALLHDSHFATNVDVRKFFAKSMRSHPLVDDIYNGFDVDKKHQSSSVPTLPNLTNISRVLSNKTSKSAKPKRSERTGLLSHQSTLAPEPLSQQRDSFELCTTGYRDTGSCTSDDEDSIHEPYRPASTQPTENPPAMPDHNGSPTTEPPKPNAFELKEERLKEIISGGFALVDELCSLNSKLWFFRKSVLTIMKTTVLHGPGRFSAQVERMLKNQIYDKLSNTQLVGDLLTSLILNVWPDEKKAMESHSTRAHRRSTESKISFDSEADSLFEEASKSVPEDPVSVFCDEESDESLRLRAEKTLVENALSENFTLMLGQSTSEESLKIIFELLQEPQFVQGFLAHLLSNALRSII.

Over 1-20 (MYRKWDLCITRHLLPYIEHS) the chain is Cytoplasmic. A helical; Signal-anchor for type II membrane protein transmembrane segment spans residues 21–41 (VIPIIALLVLSLIFYILYICF). Residues 42–749 (GTTSYILSGI…LLSNALRSII (708 aa)) are Lumenal-facing. Residues 88 to 261 (PPELEAPLQL…CIILYFSSSE (174 aa)) enclose the PXA domain. The PX domain maps to 311–422 (LHYQFLKEAS…KFFAKSMRSH (112 aa)). Disordered regions lie at residues 439–489 (QSSS…LSQQ) and 504–546 (GSCT…PPKP). Polar residues-rich tracts occupy residues 440–461 (SSSVPTLPNLTNISRVLSNKTS) and 475–489 (LSHQSTLAPEPLSQQ).

This sequence belongs to the sorting nexin family.

Its subcellular location is the endoplasmic reticulum membrane. Its function is as follows. Has a role in meiosis. In Schizosaccharomyces pombe (strain 972 / ATCC 24843) (Fission yeast), this protein is Meiotically up-regulated gene 122 protein (mug122).